A 582-amino-acid chain; its full sequence is Probable DNA ligase (582 aa).

Glu-243 is a binding site for ATP. Lys-245 functions as the N6-AMP-lysine intermediate in the catalytic mechanism. Arg-250, Arg-265, Glu-295, Phe-335, Arg-410, and Lys-416 together coordinate ATP.

It belongs to the ATP-dependent DNA ligase family. It depends on Mg(2+) as a cofactor.

It carries out the reaction ATP + (deoxyribonucleotide)n-3'-hydroxyl + 5'-phospho-(deoxyribonucleotide)m = (deoxyribonucleotide)n+m + AMP + diphosphate.. Functionally, DNA ligase that seals nicks in double-stranded DNA during DNA replication, DNA recombination and DNA repair. The chain is Probable DNA ligase from Dictyoglomus turgidum (strain DSM 6724 / Z-1310).